The chain runs to 209 residues: Large ribosomal subunit protein uL3 (209 aa).

It belongs to the universal ribosomal protein uL3 family. As to quaternary structure, part of the 50S ribosomal subunit. Forms a cluster with proteins L14 and L19.

Functionally, one of the primary rRNA binding proteins, it binds directly near the 3'-end of the 23S rRNA, where it nucleates assembly of the 50S subunit. The chain is Large ribosomal subunit protein uL3 from Moorella thermoacetica (strain ATCC 39073 / JCM 9320).